We begin with the raw amino-acid sequence, 510 residues long: MDFELKTLTRTLICNEKADALIVLIPEGLTAGDDALSVLAALAIKSGDLEVKPGKLLNAYRVTGIAATRVLLVGAGDASPKSVRTAVNAAMGALKAGNNVQRAVLCLNALPTLQPEAVRAAIVACSETAYAYTTTKSKPAAAKLQQMVVAVDGLANAQAGFDKAVGLAKGIELAKEWANRPANHATPTLLAGAAKELGKLPRIKTEVLGPKEIEKLGMGAFLAVAQGTAEPLRFIVLRYEGAAKAEAPVVLIGKGITFDTGGISIKPAAEMDEMKFDMCGAASVLGTFRALAELQPGLNVVGLIPACENMPGDRAIKPGDVVTSMSGQTIEILNTDAEGRLVLCDALTYAARLKPRAVVDIATLTGACVVALGGVRSGLFSNNEALAESLARAGESSLDPCWRMPLDDDYAEGLKSNFADVANVAGRAGGAVTAAKFLQRFAADFAWAHLDIAGTAWKSGAAKGATGRPVALLLDFLLGQVQAVPAAQPVKASPKTRPARKSTPAAKTRA.

Mn(2+) contacts are provided by lysine 254 and aspartate 259. Residue lysine 266 is part of the active site. Mn(2+) is bound by residues aspartate 277, aspartate 336, and glutamate 338. The active site involves arginine 340. The tract at residues alanine 487–alanine 510 is disordered.

The protein belongs to the peptidase M17 family. It depends on Mn(2+) as a cofactor.

It is found in the cytoplasm. The enzyme catalyses Release of an N-terminal amino acid, Xaa-|-Yaa-, in which Xaa is preferably Leu, but may be other amino acids including Pro although not Arg or Lys, and Yaa may be Pro. Amino acid amides and methyl esters are also readily hydrolyzed, but rates on arylamides are exceedingly low.. It catalyses the reaction Release of an N-terminal amino acid, preferentially leucine, but not glutamic or aspartic acids.. Functionally, presumably involved in the processing and regular turnover of intracellular proteins. Catalyzes the removal of unsubstituted N-terminal amino acids from various peptides. This chain is Probable cytosol aminopeptidase, found in Polaromonas naphthalenivorans (strain CJ2).